Here is a 377-residue protein sequence, read N- to C-terminus: Peptidyl-prolyl cis-trans isomerase D (377 aa).

The region spanning 11-178 (YFDIQIGSQK…TDVTIVDCGE (168 aa)) is the PPIase cyclophilin-type domain. TPR repeat units follow at residues 220 to 253 (ASEL…LNEF), 273 to 306 (FTLH…ADAA), and 314 to 347 (AKAY…APGD).

It belongs to the cyclophilin-type PPIase family. PPIase D subfamily.

It is found in the cytoplasm. It carries out the reaction [protein]-peptidylproline (omega=180) = [protein]-peptidylproline (omega=0). Its function is as follows. PPIases accelerate the folding of proteins. It catalyzes the cis-trans isomerization of proline imidic peptide bonds in oligopeptides. The polypeptide is Peptidyl-prolyl cis-trans isomerase D (cpr6) (Aspergillus fumigatus (strain ATCC MYA-4609 / CBS 101355 / FGSC A1100 / Af293) (Neosartorya fumigata)).